We begin with the raw amino-acid sequence, 132 residues long: Small ribosomal subunit protein uS8 (132 aa).

The protein belongs to the universal ribosomal protein uS8 family. As to quaternary structure, part of the 30S ribosomal subunit. Contacts proteins S5 and S12.

Its function is as follows. One of the primary rRNA binding proteins, it binds directly to 16S rRNA central domain where it helps coordinate assembly of the platform of the 30S subunit. The polypeptide is Small ribosomal subunit protein uS8 (Desulfitobacterium hafniense (strain DSM 10664 / DCB-2)).